The following is a 981-amino-acid chain: Calsyntenin-1 (981 aa).

Positions 1 to 28 (MLRRPAPALAPAARLLLAGLLCGGGVWA) are cleaved as a signal peptide. Over 29–859 (ARVNKHKPWL…PHPFAVVPST (831 aa)) the chain is Extracellular. Cadherin domains follow at residues 38–164 (LEPT…APVF) and 165–265 (KEKS…TPGW). 3 N-linked (GlcNAc...) asparagine glycosylation sites follow: asparagine 346, asparagine 366, and asparagine 515. Residues 860–880 (ATVVIVVCVSFLVFMIILGVF) traverse the membrane as a helical segment. The Cytoplasmic segment spans residues 881-981 (RIRAAHRRTM…LEWDDSTLSY (101 aa)). The segment at 915–981 (METYEDQHSS…LEWDDSTLSY (67 aa)) is disordered. Residues 925–960 (EEEEEEEEEEESEDGEEEDDITSAESESSEEEEGEQ) show a composition bias toward acidic residues. A compositionally biased stretch (polar residues) spans 962-981 (DPQNATRQQQLEWDDSTLSY).

Belongs to the calsyntenin family. As to quaternary structure, directly interacts with APBA2. Forms a tripartite complex with APBA2 and APP. Interacts with KLC1. In terms of assembly, interacts with APBB1; this interaction stabilizes AlcICD metabolism. Interacts with PSEN1. Proteolytically processed under normal cellular conditions. A primary zeta-cleavage generates a large extracellular (soluble) N-terminal domain (sAlc) and a short C-terminal transmembrane fragment (CTF1). A secondary cleavage catalyzed by presenilin gamma-secretase within the transmembrane domain releases the beta-Alc-alpha chain in the extracellular milieu and produces an intracellular fragment (AlcICD). This processing is strongly suppressed in the tripartite complex formed with APBA2 and APP, which seems to prevent the association with PSEN1. As to expression, expressed in the brain and, a lower level, in the heart, skeletal muscle, kidney and placenta. Accumulates in dystrophic neurites around the amyloid core of Alzheimer disease senile plaques (at protein level).

The protein localises to the postsynaptic cell membrane. It localises to the endoplasmic reticulum membrane. Its subcellular location is the golgi apparatus membrane. The protein resides in the cell projection. It is found in the neuron projection. The protein localises to the nucleus. Postsynaptic adhesion molecule that binds to presynaptic neurexins to mediate both excitatory and inhibitory synapse formation. Promotes synapse development by acting as a cell adhesion molecule at the postsynaptic membrane, which associates with neurexin-alpha at the presynaptic membrane. Also functions as a cargo in axonal anterograde transport by acting as a molecular adapter that promotes KLC1 association with vesicles. Complex formation with APBA2 and APP, stabilizes APP metabolism and enhances APBA2-mediated suppression of beta-APP40 secretion, due to the retardation of intracellular APP maturation. Its function is as follows. As intracellular fragment AlcICD, suppresses APBB1-dependent transactivation stimulated by APP C-terminal intracellular fragment (AICD), most probably by competing with AICD for APBB1-binding. In terms of biological role, in complex with APBA2 and C99, a C-terminal APP fragment, abolishes C99 interaction with PSEN1 and thus APP C99 cleavage by gamma-secretase, most probably through stabilization of the direct interaction between APBA2 and APP. This is Calsyntenin-1 from Homo sapiens (Human).